A 103-amino-acid chain; its full sequence is Large ribosomal subunit protein uL24 (103 aa).

It belongs to the universal ribosomal protein uL24 family. In terms of assembly, part of the 50S ribosomal subunit.

One of two assembly initiator proteins, it binds directly to the 5'-end of the 23S rRNA, where it nucleates assembly of the 50S subunit. Functionally, one of the proteins that surrounds the polypeptide exit tunnel on the outside of the subunit. This is Large ribosomal subunit protein uL24 from Roseobacter denitrificans (strain ATCC 33942 / OCh 114) (Erythrobacter sp. (strain OCh 114)).